The sequence spans 65 residues: Large ribosomal subunit protein bL35 (65 aa).

The protein belongs to the bacterial ribosomal protein bL35 family.

In Clostridium acetobutylicum (strain ATCC 824 / DSM 792 / JCM 1419 / IAM 19013 / LMG 5710 / NBRC 13948 / NRRL B-527 / VKM B-1787 / 2291 / W), this protein is Large ribosomal subunit protein bL35.